A 264-amino-acid polypeptide reads, in one-letter code: Pro-opiomelanocortin (264 aa).

A signal peptide spans 1–26; the sequence is MPRSCCSRSGALLLALLLQASMEVRG. Phenylalanine 87 carries the phenylalanine amide modification. Disordered stretches follow at residues 88–204 and 219–238; these read GRRN…DLEH and RMEHFRWGSPPKDKRYGGFM. N-linked (GlcNAc...) asparagine glycosylation is present at asparagine 91. Composition is skewed to basic and acidic residues over residues 99–122 and 130–142; these read QKREDVAAGEDRGLLPEGGPEPRG and REGKRSYSMEHFR. Glutamate 131 bears the Glutamic acid 1-amide mark. An N-acetylserine; in Corticotropin modification is found at serine 135. Valine amide is present on valine 147. Serine 165 is subject to Phosphoserine. Residues 172 to 186 show a composition bias toward basic and acidic residues; that stretch reads EFKRELTGQRPRAGD. The span at 189–199 shows a compositional bias: low complexity; it reads DGPADDGAGPR. Residues 219–234 are compositionally biased toward basic and acidic residues; sequence RMEHFRWGSPPKDKRY.

The protein belongs to the POMC family. Post-translationally, specific enzymatic cleavages at paired basic residues yield the different active peptides. As to expression, ACTH and MSH are produced by the pituitary gland.

The protein localises to the secreted. In terms of biological role, stimulates the adrenal glands to release cortisol. Functionally, anorexigenic peptide. Increases the pigmentation of skin by increasing melanin production in melanocytes. Its function is as follows. Increases the pigmentation of skin by increasing melanin production in melanocytes. Endogenous orexigenic opiate. In terms of biological role, endogenous opiate. The protein is Pro-opiomelanocortin (POMC) of Macaca nemestrina (Pig-tailed macaque).